A 205-amino-acid chain; its full sequence is Thiamine-phosphate synthase (205 aa).

4-amino-2-methyl-5-(diphosphooxymethyl)pyrimidine-binding positions include 35 to 39 (QYRDK) and Asn-67. Positions 68 and 86 each coordinate Mg(2+). 4-amino-2-methyl-5-(diphosphooxymethyl)pyrimidine is bound at residue Thr-105. Position 132-134 (132-134 (SLT)) interacts with 2-[(2R,5Z)-2-carboxy-4-methylthiazol-5(2H)-ylidene]ethyl phosphate. Lys-135 contacts 4-amino-2-methyl-5-(diphosphooxymethyl)pyrimidine. Gly-162 provides a ligand contact to 2-[(2R,5Z)-2-carboxy-4-methylthiazol-5(2H)-ylidene]ethyl phosphate.

This sequence belongs to the thiamine-phosphate synthase family. It depends on Mg(2+) as a cofactor.

The catalysed reaction is 2-[(2R,5Z)-2-carboxy-4-methylthiazol-5(2H)-ylidene]ethyl phosphate + 4-amino-2-methyl-5-(diphosphooxymethyl)pyrimidine + 2 H(+) = thiamine phosphate + CO2 + diphosphate. It catalyses the reaction 2-(2-carboxy-4-methylthiazol-5-yl)ethyl phosphate + 4-amino-2-methyl-5-(diphosphooxymethyl)pyrimidine + 2 H(+) = thiamine phosphate + CO2 + diphosphate. It carries out the reaction 4-methyl-5-(2-phosphooxyethyl)-thiazole + 4-amino-2-methyl-5-(diphosphooxymethyl)pyrimidine + H(+) = thiamine phosphate + diphosphate. It participates in cofactor biosynthesis; thiamine diphosphate biosynthesis; thiamine phosphate from 4-amino-2-methyl-5-diphosphomethylpyrimidine and 4-methyl-5-(2-phosphoethyl)-thiazole: step 1/1. Its function is as follows. Condenses 4-methyl-5-(beta-hydroxyethyl)thiazole monophosphate (THZ-P) and 2-methyl-4-amino-5-hydroxymethyl pyrimidine pyrophosphate (HMP-PP) to form thiamine monophosphate (TMP). The sequence is that of Thiamine-phosphate synthase from Pseudomonas syringae pv. syringae (strain B728a).